The sequence spans 855 residues: Discoidin domain-containing receptor 2 (855 aa).

The signal sequence occupies residues 1–21 (MILIPRMLLVLFLLLPILSSA). Over 22–399 (KAQVNPAICR…MLKVDDSNTR (378 aa)) the chain is Extracellular. The F5/8 type C domain occupies 30–185 (CRYPLGMSGG…VCMRVELYGC (156 aa)). Cystine bridges form between Cys-30–Cys-185 and Cys-73–Cys-177. N-linked (GlcNAc...) asparagine glycosylation is found at Asn-121, Asn-213, Asn-261, Asn-280, and Asn-372. Residues 400-421 (ILIGCLVAIIFILLAIIVIILW) traverse the membrane as a helical segment. Residues 422-855 (RQFWQKMLEK…HLLLLQQGDE (434 aa)) lie on the Cytoplasmic side of the membrane. The interval 452–471 (SMFNNNRSSSPSEQGSNSTY) is disordered. Tyr-471 bears the Phosphotyrosine; by SRC and autocatalysis mark. The region spanning 563 to 849 (LTFKEKLGEG…PSFQEIHLLL (287 aa)) is the Protein kinase domain. ATP is bound by residues 569 to 577 (LGEGQFGEV) and Lys-608. Residue Asp-710 is the Proton acceptor of the active site. Tyr-736, Tyr-740, and Tyr-741 each carry phosphotyrosine; by SRC and autocatalysis.

The protein belongs to the protein kinase superfamily. Tyr protein kinase family. Insulin receptor subfamily. Binds hydroxyproline-rich sequence motifs in fibrillar, glycosylated collagen, such as the GQOGVMGFO motif, where O stands for hydroxyproline. Interacts with SRC. Interacts (tyrosine phosphorylated) with SHC1. In terms of processing, N-glycosylated. Tyrosine phosphorylated in response to collagen binding. Phosphorylated by SRC; this is required for activation and subsequent autophosphorylation on additional tyrosine residues. As to expression, detected in osteocytes, osteoblastic cells in subchondral bone, bone lining cells, tibia and cartilage (at protein level). Detected at high levels in heart and lung, and at low levels in brain, placenta, liver, skeletal muscle, pancreas, and kidney.

Its subcellular location is the cell membrane. The catalysed reaction is L-tyrosyl-[protein] + ATP = O-phospho-L-tyrosyl-[protein] + ADP + H(+). With respect to regulation, present in an inactive state in the absence of collagen binding and phosphorylation by SRC. Tyrosine phosphorylation enhances the affinity for ATP and the catalytic activity. Tyrosine kinase involved in the regulation of tissues remodeling. It functions as a cell surface receptor for fibrillar collagen and regulates cell differentiation, remodeling of the extracellular matrix, cell migration and cell proliferation. Required for normal bone development. Regulates osteoblast differentiation and chondrocyte maturation via a signaling pathway that involves MAP kinases and leads to the activation of the transcription factor RUNX2. Regulates remodeling of the extracellular matrix by up-regulation of the collagenases MMP1, MMP2 and MMP13, and thereby facilitates cell migration and tumor cell invasion. Promotes fibroblast migration and proliferation, and thereby contributes to cutaneous wound healing. This Homo sapiens (Human) protein is Discoidin domain-containing receptor 2 (DDR2).